Reading from the N-terminus, the 89-residue chain is Small ribosomal subunit protein uS15 (89 aa).

Residues 1–21 are compositionally biased toward basic and acidic residues; that stretch reads MSITAERKAEVIKDNARDKGD. Residues 1–26 are disordered; sequence MSITAERKAEVIKDNARDKGDTGSPE.

The protein belongs to the universal ribosomal protein uS15 family. Part of the 30S ribosomal subunit. Forms a bridge to the 50S subunit in the 70S ribosome, contacting the 23S rRNA.

Functionally, one of the primary rRNA binding proteins, it binds directly to 16S rRNA where it helps nucleate assembly of the platform of the 30S subunit by binding and bridging several RNA helices of the 16S rRNA. Forms an intersubunit bridge (bridge B4) with the 23S rRNA of the 50S subunit in the ribosome. In Sphingopyxis alaskensis (strain DSM 13593 / LMG 18877 / RB2256) (Sphingomonas alaskensis), this protein is Small ribosomal subunit protein uS15.